The sequence spans 226 residues: Peroxynitrite isomerase 2 (226 aa).

The GXWXGXG motif lies at 73 to 79 (GVWRGEG). 2 residues coordinate heme b: Lys189 and His216.

Belongs to the nitrobindin family. Homodimer. Requires heme b as cofactor.

It carries out the reaction peroxynitrite = nitrate. The protein operates within nitrogen metabolism. Heme-binding protein able to scavenge peroxynitrite and to protect free L-tyrosine against peroxynitrite-mediated nitration, by acting as a peroxynitrite isomerase that converts peroxynitrite to nitrate. Therefore, this protein likely plays a role in peroxynitrite sensing and in the detoxification of reactive nitrogen and oxygen species (RNS and ROS, respectively). Is able to bind nitric oxide (NO) in vitro, but may act as a sensor of peroxynitrite levels in vivo. The polypeptide is Peroxynitrite isomerase 2 (Mycobacterium bovis (strain ATCC BAA-935 / AF2122/97)).